A 207-amino-acid chain; its full sequence is Thymidylate kinase (207 aa).

7 to 14 serves as a coordination point for ATP; that stretch reads GCEGTGKT.

This sequence belongs to the thymidylate kinase family.

It catalyses the reaction dTMP + ATP = dTDP + ADP. In terms of biological role, phosphorylation of dTMP to form dTDP in both de novo and salvage pathways of dTTP synthesis. The sequence is that of Thymidylate kinase from Aster yellows witches'-broom phytoplasma (strain AYWB).